The following is a 72-amino-acid chain: Large ribosomal subunit protein bL31 (72 aa).

Positions 16, 18, 38, and 41 each coordinate Zn(2+).

It belongs to the bacterial ribosomal protein bL31 family. Type A subfamily. As to quaternary structure, part of the 50S ribosomal subunit. It depends on Zn(2+) as a cofactor.

Functionally, binds the 23S rRNA. The protein is Large ribosomal subunit protein bL31 of Vibrio atlanticus (strain LGP32) (Vibrio splendidus (strain Mel32)).